Here is a 229-residue protein sequence, read N- to C-terminus: Large ribosomal subunit protein uL1 (229 aa).

The protein belongs to the universal ribosomal protein uL1 family. In terms of assembly, part of the 50S ribosomal subunit.

Functionally, binds directly to 23S rRNA. The L1 stalk is quite mobile in the ribosome, and is involved in E site tRNA release. In terms of biological role, protein L1 is also a translational repressor protein, it controls the translation of the L11 operon by binding to its mRNA. The sequence is that of Large ribosomal subunit protein uL1 from Streptococcus pneumoniae (strain ATCC 700669 / Spain 23F-1).